We begin with the raw amino-acid sequence, 515 residues long: MMLKSCGLIFKGKRFVRLFIFIAVCLGFLIAVTILAGLTIFDRQHNHILHDYVARNDDIVVLSTTYYENSKSFPPNTAVILFNSVQVFHLKYSNLNVVAETMQGNVEVQFKIQPVINTIPFFCKWVPYLAVGQVPEDHVLLKLSTNKIDGMELSLRTPYETPRKVVACFSPLFLNERWQLLLATVEIYSHYGAFMHFYVRSIITDLFKLIKDNKNTRISPWSAIRIGESRAASPMFDPNTELEFRNQASAMTDCLLQYKEAAEFIVFPDPDDILVPVLGKNYYEEFTQAFKMFPTAGAVVYNMTQTSIESSMTPALYSPISMLASMKFKGEQKWGKLVVRPERVDSTWIHRSYAIKEGFEQKVMPVDVNAFYHLRIWKFPEVPTFNRSKISNPPFFDPYHLNATKRAIYKISDGLKIQRKFKNRVSQGTMKTIYSRLPKVSLYYPLIEVCYNRIFYSMKDIGTCRGPEYCNIPAFPGLRCTNVASEFVTYKSYRNIYIHQLISTDFEEGDNGCTL.

The helical transmembrane segment at 18–38 threads the bilayer; the sequence is LFIFIAVCLGFLIAVTILAGL. The 294-residue stretch at 163-456 folds into the GT92 domain; the sequence is RKVVACFSPL…IEVCYNRIFY (294 aa).

The protein belongs to the glycosyltransferase 92 family.

It localises to the membrane. The sequence is that of Glycosyltransferase family 92 protein F59C6.8 from Caenorhabditis elegans.